The chain runs to 355 residues: NADH-quinone oxidoreductase subunit H (355 aa).

8 helical membrane passes run 25–45, 91–111, 126–146, 170–190, 205–225, 253–273, 290–310, and 330–350; these read VVRI…LILW, WLYL…WAVI, LLYA…AGWA, MGFA…SEIV, FLSW…ISGI, MAFA…SALA, FIPG…VFIW, and VFLP…MSPL.

Belongs to the complex I subunit 1 family. In terms of assembly, NDH-1 is composed of 14 different subunits. Subunits NuoA, H, J, K, L, M, N constitute the membrane sector of the complex.

Its subcellular location is the cell inner membrane. The enzyme catalyses a quinone + NADH + 5 H(+)(in) = a quinol + NAD(+) + 4 H(+)(out). Functionally, NDH-1 shuttles electrons from NADH, via FMN and iron-sulfur (Fe-S) centers, to quinones in the respiratory chain. The immediate electron acceptor for the enzyme in this species is believed to be ubiquinone. Couples the redox reaction to proton translocation (for every two electrons transferred, four hydrogen ions are translocated across the cytoplasmic membrane), and thus conserves the redox energy in a proton gradient. This subunit may bind ubiquinone. This chain is NADH-quinone oxidoreductase subunit H, found in Burkholderia cenocepacia (strain HI2424).